We begin with the raw amino-acid sequence, 193 residues long: Cryptic protein (193 aa).

The signal sequence occupies residues 1–25 (MFWRKHVRILFTVTLIWQAIHLGKG). N-linked (GlcNAc...) asparagine glycans are attached at residues Asn38 and Asn60. Intrachain disulfides connect Cys91–Cys103 and Cys105–Cys114. Positions 91-115 (CQNGGTCILGAFCACPKHFSGRHCE) constitute an EGF-like domain.

Belongs to the EGF-CFC (Cripto-1/FRL1/Cryptic) family.

The protein localises to the cell membrane. Its subcellular location is the secreted. Functionally, may play a role in mesoderm and/or neural patterning during gastrulation. The sequence is that of Cryptic protein (CFC1) from Gallus gallus (Chicken).